The sequence spans 464 residues: GDNF family receptor alpha-2 (464 aa).

Positions 1–21 are cleaved as a signal peptide; that stretch reads MILANAFCLFFFLDETLRSLA. 14 disulfides stabilise this stretch: C40–C93, C47–C53, C63–C78, C95–C105, C161–C222, C168–C174, C185–C200, C195–C241, C224–C229, C251–C323, C258–C264, C275–C293, C285–C347, and C325–C335. N-linked (GlcNAc...) asparagine glycosylation occurs at N52. The N-linked (GlcNAc...) asparagine glycan is linked to N357. The segment at 363–392 is disordered; it reads MSPKGPTFSATQAPRVEKTPSLPDDLSDST. Over residues 381–392 the composition is skewed to low complexity; that stretch reads TPSLPDDLSDST. N413 carries an N-linked (GlcNAc...) asparagine glycan. S443 carries GPI-anchor amidated serine lipidation. Residues 444–464 constitute a propeptide, removed in mature form; it reads CRARLSTALTALPLLMVTLAQ.

The protein belongs to the GDNFR family. As to quaternary structure, interacts with NRTN ligand and RET: forms a 2:2:2 ternary complex composed of NRTN ligand, GFRA2 and RET receptor. Also forms a 4:4:4 tetrameric complex composed of 4 copies of NRTN ligand, GFRA2 and RET receptor, which prevents endocytosis of RET. Interacts with SORL1. Neurons of the superior cervical and dorsal root ganglia, and adult brain and testis. Low level in the substantia nigra, spleen and adrenal gland. Isoform 1, isoform 2 and isoform 3 are all expressed in brain, liver, ileum, spleen, heart and kidney. In brain, isoform 1 is most abundant, isoform 2 slightly less and isoform 3 is lowest. No significant levels of isoform 1, isoform 2 or isoform 3 expression in testis.

Its subcellular location is the cell membrane. In terms of biological role, receptor for neurturin (NRTN), a growth factor that supports the survival of sympathetic neurons. NRTN-binding leads to autophosphorylation and activation of the RET receptor. Also able to mediate GDNF signaling through the RET tyrosine kinase receptor. Participates in NRTN-induced 'Ser-727' phosphorylation of STAT3. This Mus musculus (Mouse) protein is GDNF family receptor alpha-2.